Reading from the N-terminus, the 227-residue chain is H-2 class II histocompatibility antigen, A-U alpha chain (227 aa).

An alpha-1 region spans residues Asp-1–Asn-82. At Asp-1–Glu-189 the chain is on the extracellular side. Residues Glu-83 to Trp-176 are alpha-2. The Ig-like C1-type domain occupies Pro-85 to Glu-177. Cys-105 and Cys-161 are joined by a disulfide. Asn-116 is a glycosylation site (N-linked (GlcNAc...) asparagine). The segment at Glu-177–Glu-189 is connecting peptide. Residues Thr-190 to Leu-215 form a helical membrane-spanning segment. At Arg-216–Leu-227 the chain is on the cytoplasmic side.

It belongs to the MHC class II family.

The protein localises to the membrane. The polypeptide is H-2 class II histocompatibility antigen, A-U alpha chain (H2-Aa) (Mus musculus (Mouse)).